Reading from the N-terminus, the 117-residue chain is Non-specific lipid-transfer protein B (117 aa).

An N-terminal signal peptide occupies residues 1–25; it reads MAGLVKLSCLVLACMIVAGPIATNA. Intrachain disulfides connect Cys29–Cys76, Cys39–Cys53, Cys54–Cys99, and Cys74–Cys113.

The protein belongs to the plant LTP family.

Its function is as follows. Plant non-specific lipid-transfer proteins transfer phospholipids as well as galactolipids across membranes. May play a role in wax or cutin deposition in the cell walls of expanding epidermal cells and certain secretory tissues. The polypeptide is Non-specific lipid-transfer protein B (WAX9B) (Brassica oleracea var. italica (Broccoli)).